The sequence spans 87 residues: Small ribosomal subunit protein bS20 (87 aa).

Positions 1–11 are enriched in basic residues; sequence MANHKSALKRI. A disordered region spans residues 1–23; that stretch reads MANHKSALKRIKQTEKRTERNRH.

The protein belongs to the bacterial ribosomal protein bS20 family.

Functionally, binds directly to 16S ribosomal RNA. This Geotalea uraniireducens (strain Rf4) (Geobacter uraniireducens) protein is Small ribosomal subunit protein bS20.